The following is a 301-amino-acid chain: MDKPSFVIQSKEAESAAKQLGVSVIQLLPSLVKPAQSYARTPISKFNVAVVGLGSSGRIFLGVNVEFPNLPLHHSIHAEQFLVTNLTLNGERHLNFFAVSAAPCGHCRQFLQEIRDAPEIKILITDPNNSADSDSAADSDGFLRLGSFLPHRFGPDDLLGKDHPLLLESHDNHLKISDLDSICNGNTDSSADLKQTALAAANRSYAPYSLCPSGVSLVDCDGKVYRGWYMESAAYNPSMGPVQAALVDYVANGGGGGYERIVGAVLVEKEDAVVRQEHTARLLLETISPKCEFKVFHCYEA.

CMP/dCMP-type deaminase domains follow at residues 23–156 (SVIQ…FGPD) and 188–301 (DSSA…CYEA). Substrate is bound at residue 64-66 (NVE). Residue histidine 77 participates in Zn(2+) binding. Glutamate 79 acts as the Proton donor in catalysis. Residues cysteine 104 and cysteine 107 each coordinate Zn(2+).

It belongs to the cytidine and deoxycytidylate deaminase family. Homodimer. The cofactor is Zn(2+). As to expression, expressed in roots, rosette leaves, stems and flowers.

The catalysed reaction is cytidine + H2O + H(+) = uridine + NH4(+). It carries out the reaction 2'-deoxycytidine + H2O + H(+) = 2'-deoxyuridine + NH4(+). Its activity is regulated as follows. Inhibited by uridine, CMP and dCMP. Its function is as follows. This enzyme scavenges exogenous and endogenous cytidine and 2'-deoxycytidine for UMP synthesis. Functions as a conventional cytidine deaminase. Has no affinity for RNA and is not involved in RNA-editing by C-to-U deamination. The chain is Cytidine deaminase 1 (CDA1) from Arabidopsis thaliana (Mouse-ear cress).